A 140-amino-acid polypeptide reads, in one-letter code: Histone H2B.1, sperm (140 aa).

The interval 1–47 (MPSQRSPTKRSPTKRSPQKGAGKGGKGSKRGGKARRRGGAAVRRRRR) is disordered. Short sequence motifs (SPKK motif) lie at residues 6–9 (SPTK), 11–14 (SPTK), and 16–19 (SPQK). Basic residues-rich tracts occupy residues 7 to 17 (PTKRSPTKRSP) and 26 to 47 (KGSK…RRRR). Serine 11 and serine 16 each carry phosphoserine. Residue serine 127 is glycosylated (O-linked (GlcNAc) serine). A Glycyl lysine isopeptide (Lys-Gly) (interchain with G-Cter in ubiquitin) cross-link involves residue lysine 135.

It belongs to the histone H2B family. In terms of assembly, the nucleosome is a histone octamer containing two molecules each of H2A, H2B, H3 and H4 assembled in one H3-H4 heterotetramer and two H2A-H2B heterodimers. The octamer wraps approximately 147 bp of DNA. In terms of processing, monoubiquitination of Lys-135 gives a specific tag for epigenetic transcriptional activation and is also prerequisite for histone H3 'Lys-4' and 'Lys-79' methylation. Post-translationally, phosphorylated on SPKK motifs 2 and 3; which may regulate DNA binding. Dephosphorylated during maturation of spermatids to mature sperm and rephosphorylated at fertilization. GlcNAcylation at Ser-127 promotes monoubiquitination of Lys-135. It fluctuates in response to extracellular glucose, and associates with transcribed genes.

It is found in the nucleus. Its subcellular location is the chromosome. In terms of biological role, core component of nucleosome. Nucleosomes wrap and compact DNA into chromatin, limiting DNA accessibility to the cellular machineries which require DNA as a template. Histones thereby play a central role in transcription regulation, DNA repair, DNA replication and chromosomal stability. DNA accessibility is regulated via a complex set of post-translational modifications of histones, also called histone code, and nucleosome remodeling. This chain is Histone H2B.1, sperm, found in Strongylocentrotus purpuratus (Purple sea urchin).